The chain runs to 262 residues: Adenosylcobinamide-GDP ribazoletransferase (262 aa).

Transmembrane regions (helical) follow at residues 43–63 (YFGL…WLTQ), 66–86 (LPAG…TGGF), 120–140 (GALA…ELAL), 146–166 (AGSA…SLIF), 191–211 (LFIL…IAAL), and 242–262 (AAQQ…GSIL).

Belongs to the CobS family. Requires Mg(2+) as cofactor.

It localises to the cell inner membrane. It carries out the reaction alpha-ribazole + adenosylcob(III)inamide-GDP = adenosylcob(III)alamin + GMP + H(+). It catalyses the reaction alpha-ribazole 5'-phosphate + adenosylcob(III)inamide-GDP = adenosylcob(III)alamin 5'-phosphate + GMP + H(+). It functions in the pathway cofactor biosynthesis; adenosylcobalamin biosynthesis; adenosylcobalamin from cob(II)yrinate a,c-diamide: step 7/7. Functionally, joins adenosylcobinamide-GDP and alpha-ribazole to generate adenosylcobalamin (Ado-cobalamin). Also synthesizes adenosylcobalamin 5'-phosphate from adenosylcobinamide-GDP and alpha-ribazole 5'-phosphate. This is Adenosylcobinamide-GDP ribazoletransferase from Shewanella sp. (strain ANA-3).